The following is a 127-amino-acid chain: MISKIFEIVHKHQKFISGVCISKTHTKTAMCQVKRLYFDKGKYSALNYKTTKYMIHDPNDICAVGDQVHFRECAPVSKRKAHVVEKIVKKNPITEFLRQNPQYIVTPKEIAERKENDKIKYKHITDL.

This sequence belongs to the universal ribosomal protein uS17 family.

Its subcellular location is the mitochondrion. In Dictyostelium discoideum (Social amoeba), this protein is Small ribosomal subunit protein uS17m (mrps17).